A 210-amino-acid chain; its full sequence is Fimbriae Z protein (210 aa).

The Response regulatory domain maps to 5–121 (SVIIMDEHPI…DIYNAVKMIL (117 aa)). Position 56 is a 4-aspartylphosphate (aspartate 56). An HTH luxR-type domain is found at 143 to 208 (GGHHDMPLSN…ELIDYAKSHE (66 aa)). The H-T-H motif DNA-binding region spans 167 to 186 (NKEIAEQLLLSNKTISAHKA).

Its subcellular location is the cytoplasm. The protein is Fimbriae Z protein (fimZ) of Salmonella typhimurium (strain LT2 / SGSC1412 / ATCC 700720).